The sequence spans 263 residues: L-aspartate dehydrogenase (263 aa).

Residues Ala120 and Asn186 each coordinate NAD(+). His216 is an active-site residue.

The protein belongs to the L-aspartate dehydrogenase family.

It catalyses the reaction L-aspartate + NADP(+) + H2O = oxaloacetate + NH4(+) + NADPH + H(+). The catalysed reaction is L-aspartate + NAD(+) + H2O = oxaloacetate + NH4(+) + NADH + H(+). Its pathway is cofactor biosynthesis; NAD(+) biosynthesis; iminoaspartate from L-aspartate (dehydrogenase route): step 1/1. Functionally, specifically catalyzes the NAD or NADP-dependent dehydrogenation of L-aspartate to iminoaspartate. This Acinetobacter baylyi (strain ATCC 33305 / BD413 / ADP1) protein is L-aspartate dehydrogenase.